The primary structure comprises 1040 residues: MQVLPPSSTGGPSRLFIMRPVATTLLMVAILLAGIIGYRFLPVAALPEVDYPTIQVVTLYPGASPDVMTSAVTAPLERQFGQMSGLKQMSSQSSGGASVVTLQFQLTLPLDVAEQEVQAAINAATNLLPSDLPNPPVYSKVNPADPPIMTLAVTSTAMPMTQVEDMVETRVAQKISQVSGVGLVTLSGGQRPAVRVKLNAQAIAALGLTSETVRAAITSANVNSAKGSLDGPTRAVTLSANDQMQSVDEYRQLIIAWQNGAPVRLGDVATVEQGAENSWLGAWANKEQAIVMNVQRQPGANIISTADSIRQMLPQLTESLPKSVNVTVLSDRTTNIRASVTDTQFELMLAIALVVMIIYLFLRNVPATIIPGVAVPLSLIGTFAVMVFLDFSINNLTLMALTIATGFVVDDAIVVIENISRYIEKGEKPLAAALKGAGEIGFTIISLTFSLIAVLIPLLFMGDIVGRLFREFAVTLAVAILISAVVSLTLTPMMCARMLSQASLRKQNRFSRAAEKMFDRVIEKYGQWLAKVLNHPWLTLSVALGTLLLSIMLWVFIPKGFFPVQDNGIIQGTLQAPQSSSFASMAQRQRQVSDVILKDPAVESLTAFVGVDGTNPALNSARLQINLKPLNERDDRVQKVIARLQHAVAKVPGVDLYLQPTQDLTIDTQVSRTQYQFTLQATSLDALSTWVPQLMEKLQQLPQLSDVSSDWQDKGLVAYVNVDRDSASRLGISMADVDNALYNAFGQRLISTIYTQANQYRVVLEHNTDTTPGLAAMDTIRLTSSDGGIVPLSAIAKIEQRFAPLSINHLDQFPVTTFSFNVPDNYSLGDAVQAILDTEKTVNLPVDITTQFQGSTLAFQAALGSTVWLIVAAVVAMYIVLGVLYESFIHPITILSTLPTAGVGALLALMIAGSELDVIAIIGIILLIGIVKKNAIMMIDFALAAEREQGMAPRDAIFQACLLRFRPILMTTLAALLGALPLMLSTGTGAELRRPLGIGMVGGLLVSQVLTLFTTPVIYLLFDRLSLYVKSRFPRQEEEA.

Helical transmembrane passes span 25–45 (LLMV…PVAA), 342–362 (DTQF…YLFL), 369–389 (IIPG…MVFL), 396–416 (LTLM…IVVI), 440–460 (IGFT…PLLF), 472–492 (FAVT…TLTP), 537–557 (WLTL…WVFI), 863–883 (LGST…VLGV), 888–908 (FIHP…ALLA), 911–931 (IAGS…IGIV), 967–987 (PILM…LSTG), and 998–1018 (IGMV…TPVI).

Belongs to the resistance-nodulation-cell division (RND) (TC 2.A.6) family. MdtB subfamily. As to quaternary structure, part of a tripartite efflux system composed of MdtA, MdtB and MdtC. MdtB forms a heteromultimer with MdtC.

It is found in the cell inner membrane. The sequence is that of Multidrug resistance protein MdtB from Citrobacter koseri (strain ATCC BAA-895 / CDC 4225-83 / SGSC4696).